The primary structure comprises 415 residues: Maltose excess protein 1, chloroplastic (415 aa).

The interval 74–93 is disordered; it reads SESDSDSDFPHENQQGNPGL. The next 9 membrane-spanning stretches (helical) occupy residues 139–159, 176–196, 199–219, 231–251, 252–272, 286–306, 322–342, 345–365, and 373–393; these read ALSA…LSLL, LGVV…AMPI, FVAT…YYFG, DVIT…TFVP, LVPN…AAII, FVGS…PVSQ, SITM…ALFI, LMWL…NILC, and SQSF…LALW.

In terms of tissue distribution, expressed in leaves and roots. Expressed in root cap cells.

The protein localises to the plastid. Its subcellular location is the chloroplast inner membrane. Its function is as follows. Probable maltose transporter. Essential for the conversion of starch to sucrose in leaves at night, probably via the export of maltose from the chloroplast. Required for root cap cells formation. The sequence is that of Maltose excess protein 1, chloroplastic (MEX1) from Arabidopsis thaliana (Mouse-ear cress).